The primary structure comprises 253 residues: Zwei Ig domain protein zig-4 (253 aa).

The first 16 residues, 1–16 (MFAIALLSFLVVLINA), serve as a signal peptide directing secretion. Ig-like C2-type domains follow at residues 43–146 (PAKI…AEVE) and 162–245 (PEIV…TFLY). Disulfide bonds link cysteine 67–cysteine 130 and cysteine 183–cysteine 229.

Expressed in PVT, ASK, BAG, M2 and ASI neurons. In L1 larvae, expressed in pharyngeal ectoderm and mesoderm.

It is found in the secreted. Functionally, required for maintaining axon position of PVQ and PVP neurons postembryonically in the ventral nerve cord (VNC) by preventing axons drifting into the opposite side of the VNC that could occur during body growth and movement. This chain is Zwei Ig domain protein zig-4, found in Caenorhabditis elegans.